The primary structure comprises 179 residues: Cell division protein SepF (179 aa).

The disordered stretch occupies residues 18-55 (EDSSLPYEKRDEPVFTPVNSSQEPALPMNQPSQSAGTK). The span at 34–55 (PVNSSQEPALPMNQPSQSAGTK) shows a compositional bias: polar residues.

Belongs to the SepF family. In terms of assembly, homodimer. Interacts with FtsZ.

It is found in the cytoplasm. In terms of biological role, cell division protein that is part of the divisome complex and is recruited early to the Z-ring. Probably stimulates Z-ring formation, perhaps through the cross-linking of FtsZ protofilaments. Its function overlaps with FtsA. The polypeptide is Cell division protein SepF (Streptococcus pneumoniae (strain ATCC 700669 / Spain 23F-1)).